Here is a 678-residue protein sequence, read N- to C-terminus: Protein mono-ADP-ribosyltransferase PARP15 (678 aa).

Over residues 1–19 the composition is skewed to low complexity; the sequence is MAAPGPLPAAALSPGAPTP. A disordered region spans residues 1–67; the sequence is MAAPGPLPAA…SSRSMSRDNK (67 aa). The segment covering 49 to 58 has biased composition (basic residues); sequence GARKASRRSS. 2 consecutive Macro domains span residues 78–267 and 293–464; these read NVVA…TNWS and CFTA…KKRD. Residues 312–313, 324–325, arginine 331, valine 335, 409–413, and glutamine 449 each bind substrate; these read DI, ST, and GTGNA. The PARP catalytic domain occupies 482–678; the sequence is LPEHWTDMNH…YPEYLITFTA (197 aa).

Belongs to the ARTD/PARP family.

Its subcellular location is the nucleus. The enzyme catalyses L-aspartyl-[protein] + NAD(+) = 4-O-(ADP-D-ribosyl)-L-aspartyl-[protein] + nicotinamide. It catalyses the reaction L-glutamyl-[protein] + NAD(+) = 5-O-(ADP-D-ribosyl)-L-glutamyl-[protein] + nicotinamide. Its function is as follows. Mono-ADP-ribosyltransferase that mediates mono-ADP-ribosylation of target proteins. Acts as a negative regulator of transcription. This chain is Protein mono-ADP-ribosyltransferase PARP15, found in Homo sapiens (Human).